We begin with the raw amino-acid sequence, 228 residues long: MPHAALSSLVLLSLATAIVADCPSSTWVQFQGSCYAFLQVTINVENIEDVRKQCTDHGADMVSIHNEEENAFILDTLQKRWKGPDDLLLGMFYDTDDATFKWYDHSNMTFDKWADQDGEDLVDTCGFLYTKTGEWRKGDCEISSVEGTLCKAAIPYDKKYLSDNHILISTLVIASTVTLAVLGAIIWFLYRRNARSGFTSFSPAPLSPYSDGCALVVAEEDEYAVQLD.

The N-terminal stretch at 1-20 (MPHAALSSLVLLSLATAIVA) is a signal peptide. The Extracellular portion of the chain corresponds to 21–165 (DCPSSTWVQF…YDKKYLSDNH (145 aa)). The 120-residue stretch at 30-149 (FQGSCYAFLQ…CEISSVEGTL (120 aa)) folds into the C-type lectin domain. Asn-107 carries N-linked (GlcNAc...) asparagine glycosylation. A disulfide bond links Cys-125 and Cys-140. Residues 166-186 (ILISTLVIASTVTLAVLGAII) traverse the membrane as a helical segment. Residues 187 to 228 (WFLYRRNARSGFTSFSPAPLSPYSDGCALVVAEEDEYAVQLD) are Cytoplasmic-facing.

Its subcellular location is the membrane. The protein resides in the cell projection. It is found in the filopodium. It localises to the cytoplasm. The protein localises to the cell cortex. Its subcellular location is the microvillus. Potential multifunctional C-type lectin receptor that may play roles in endocytosis and phagocytosis as well as in cell adhesion and migration. The protein is CD302 antigen (Cd302) of Mus musculus (Mouse).